The chain runs to 310 residues: tRNA uridine(34) hydroxylase (310 aa).

In terms of domain architecture, Rhodanese spans 127-225 (KDKDTIVIDT…YLEDISKEES (99 aa)). Catalysis depends on Cys-185, which acts as the Cysteine persulfide intermediate.

Belongs to the TrhO family.

The catalysed reaction is uridine(34) in tRNA + AH2 + O2 = 5-hydroxyuridine(34) in tRNA + A + H2O. Catalyzes oxygen-dependent 5-hydroxyuridine (ho5U) modification at position 34 in tRNAs. This is tRNA uridine(34) hydroxylase from Prochlorococcus marinus (strain MIT 9515).